A 1036-amino-acid chain; its full sequence is Ubiquitin carboxyl-terminal hydrolase 48 (1036 aa).

Residues 89 to 421 form the USP domain; that stretch reads VGLTNLGASC…NAYMLVYRLQ (333 aa). The active-site Nucleophile is the C98. The active-site Proton acceptor is H353. DUSP domains lie at 460–554, 569–692, and 712–825; these read QSVD…KALC, NQLN…YKEC, and MIAK…RIEV. Residues 611–644 are disordered; the sequence is DEQDGEAEQSNGKINGSPFSKDESKEEKKEEEEE. Residues 618-628 are compositionally biased toward polar residues; that stretch reads EQSNGKINGSP. The interval 881 to 924 is disordered; it reads APELNVSSSETEEDKEEAKPDGEKDPDFNQSNGGTKRQKTSQQG. Phosphoserine occurs at positions 887, 888, and 889. The span at 896–907 shows a compositional bias: basic and acidic residues; that stretch reads EEAKPDGEKDPD. Residues 908 to 924 are compositionally biased toward polar residues; it reads FNQSNGGTKRQKTSQQG. Residues 930-1010 form the Ubiquitin-like domain; it reads KQVIRRSTRH…ILLKADEPIA (81 aa). K957 carries the post-translational modification N6-acetyllysine.

It belongs to the peptidase C19 family. In terms of assembly, interacts with TRAF2 and RELA. Interacts with GPS1. As to expression, present in the brain, in particular in the postsynaptic density and the dendritic lipid raft fractions (at protein level).

The protein localises to the cytoplasm. The protein resides in the nucleus. It localises to the cell projection. Its subcellular location is the cilium. The catalysed reaction is Thiol-dependent hydrolysis of ester, thioester, amide, peptide and isopeptide bonds formed by the C-terminal Gly of ubiquitin (a 76-residue protein attached to proteins as an intracellular targeting signal).. Its function is as follows. Deubiquitinase that recognizes and hydrolyzes the peptide bond at the C-terminal Gly of ubiquitin. Involved in the processing of polyubiquitin precursors as well as that of ubiquitinated proteins. Plays a role in the regulation of NF-kappa-B activation by TNF receptor superfamily via its interactions with RELA and TRAF2. May also play a regulatory role at postsynaptic sites. Plays an important role in cell cycle progression by deubiquitinating Aurora B/AURKB and thereby extending its stability. In the context of H. pylori infection, stabilizes nuclear RELA through deubiquitination, thereby promoting the transcriptional activity of RELA to prolong TNFAIP3 de novo synthesis. Consequently, TNFAIP3 suppresses caspase activity and apoptotic cell death. Also functions in the modulation of the ciliary and synaptic transport as well as cytoskeleton organization, which are key for photoreceptor function and homeostasis. To achieve this, stabilizes the levels of the retinal degeneration-associated proteins ARL3 and UNC119 using distinct mechanisms. Plays a positive role in pyroptosis by stabilizing gasdermin E/GSDME through removal of its 'Lys-48'-linked ubiquitination. The polypeptide is Ubiquitin carboxyl-terminal hydrolase 48 (Usp48) (Rattus norvegicus (Rat)).